Here is a 219-residue protein sequence, read N- to C-terminus: Large ribosomal subunit protein bL31m (219 aa).

Basic and acidic residues-rich tracts occupy residues 169 to 181 (KKEEEEAAKKAAE) and 210 to 219 (KETRHYGKKK). Disordered regions lie at residues 169-188 (KKEEEEAAKKAAEAEEADPF) and 200-219 (TENMNPGLNFKETRHYGKKK).

Belongs to the bacterial ribosomal protein bL31 family. Highly divergent. In terms of assembly, component of the mitochondrial large ribosomal subunit (mt-LSU). Mature N.crassa 74S mitochondrial ribosomes consist of a small (37S) and a large (54S) subunit. The 37S small subunit contains a 16S ribosomal RNA (16S mt-rRNA) and 32 different proteins. The 54S large subunit contains a 23S rRNA (23S mt-rRNA) and 42 different proteins. bL31m bridges the mt-LSU central protuberance and the mt-SSU head.

The protein resides in the mitochondrion. Functionally, component of the mitochondrial ribosome (mitoribosome), a dedicated translation machinery responsible for the synthesis of mitochondrial genome-encoded proteins, including at least some of the essential transmembrane subunits of the mitochondrial respiratory chain. The mitoribosomes are attached to the mitochondrial inner membrane and translation products are cotranslationally integrated into the membrane. This chain is Large ribosomal subunit protein bL31m (mrpl36), found in Neurospora crassa (strain ATCC 24698 / 74-OR23-1A / CBS 708.71 / DSM 1257 / FGSC 987).